Here is a 553-residue protein sequence, read N- to C-terminus: Serine/threonine-protein phosphatase 2B catalytic subunit A1 (553 aa).

At S2 the chain carries N-acetylserine. The Fe cation site is built by D119, H121, and D147. Zn(2+) contacts are provided by D147 and N179. Residue H180 is the Proton donor of the active site. Zn(2+) contacts are provided by H228 and H317. A disordered region spans residues 413–447 (LDPESEPKAAEETVKARANATKETGTPSDEKASSA). A compositionally biased stretch (basic and acidic residues) spans 417–427 (SEPKAAEETVK).

This sequence belongs to the PPP phosphatase family. PP-2B subfamily. In terms of assembly, composed of two components (A and B), the A component is the catalytic subunit and the B component confers calcium sensitivity. Fe(3+) serves as cofactor. Zn(2+) is required as a cofactor.

The enzyme catalyses O-phospho-L-seryl-[protein] + H2O = L-seryl-[protein] + phosphate. The catalysed reaction is O-phospho-L-threonyl-[protein] + H2O = L-threonyl-[protein] + phosphate. Calcium-dependent, calmodulin-stimulated protein phosphatase. This subunit may have a role in the calmodulin activation of calcineurin. The protein is Serine/threonine-protein phosphatase 2B catalytic subunit A1 (CNA1) of Saccharomyces cerevisiae (strain ATCC 204508 / S288c) (Baker's yeast).